Reading from the N-terminus, the 379-residue chain is Homoserine O-succinyltransferase (379 aa).

One can recognise an AB hydrolase-1 domain in the interval 51 to 360; the sequence is NAVLICHALS…DAPQGHDAFL (310 aa). The active-site Nucleophile is S157. R227 provides a ligand contact to substrate. Catalysis depends on residues D323 and H356. D357 contributes to the substrate binding site.

The protein belongs to the AB hydrolase superfamily. MetX family. Homodimer.

Its subcellular location is the cytoplasm. The enzyme catalyses L-homoserine + succinyl-CoA = O-succinyl-L-homoserine + CoA. Its pathway is amino-acid biosynthesis; L-methionine biosynthesis via de novo pathway; O-succinyl-L-homoserine from L-homoserine: step 1/1. In terms of biological role, transfers a succinyl group from succinyl-CoA to L-homoserine, forming succinyl-L-homoserine. This chain is Homoserine O-succinyltransferase, found in Stutzerimonas stutzeri (strain A1501) (Pseudomonas stutzeri).